Reading from the N-terminus, the 375-residue chain is DNA replication and repair protein RecF (375 aa).

30–37 (GENAQGKT) provides a ligand contact to ATP.

This sequence belongs to the RecF family.

It is found in the cytoplasm. Functionally, the RecF protein is involved in DNA metabolism; it is required for DNA replication and normal SOS inducibility. RecF binds preferentially to single-stranded, linear DNA. It also seems to bind ATP. The protein is DNA replication and repair protein RecF of Bacillus anthracis (strain A0248).